The chain runs to 269 residues: tRNA pseudouridine synthase A (269 aa).

Aspartate 55 functions as the Nucleophile in the catalytic mechanism. Residue tyrosine 111 coordinates substrate.

It belongs to the tRNA pseudouridine synthase TruA family.

It catalyses the reaction uridine(38/39/40) in tRNA = pseudouridine(38/39/40) in tRNA. Functionally, formation of pseudouridine at positions 38, 39 and 40 in the anticodon stem and loop of transfer RNAs. The sequence is that of tRNA pseudouridine synthase A from Methanosarcina acetivorans (strain ATCC 35395 / DSM 2834 / JCM 12185 / C2A).